Reading from the N-terminus, the 327-residue chain is Endo-1,4-beta-xylanase C (327 aa).

An N-terminal signal peptide occupies residues 1 to 15 (MKFSSLLFTASLVAA). The GH10 domain occupies 43–325 (TITDPNLLQS…KPAYTAVVNA (283 aa)). Catalysis depends on E154, which acts as the Proton donor. E262 (nucleophile) is an active-site residue. C280 and C286 are joined by a disulfide.

It belongs to the glycosyl hydrolase 10 (cellulase F) family.

It is found in the secreted. It catalyses the reaction Endohydrolysis of (1-&gt;4)-beta-D-xylosidic linkages in xylans.. It participates in glycan degradation; xylan degradation. With respect to regulation, weakly inhibited by the wheat xylanase inhibiting protein I (XIP-I). Endo-1,4-beta-xylanase involved in the hydrolysis of xylan, a major structural heterogeneous polysaccharide found in plant biomass representing the second most abundant polysaccharide in the biosphere, after cellulose. Plays an important role in causing fusarium head blight (FHB) on cereal crops. The protein is Endo-1,4-beta-xylanase C (XYLC) of Gibberella zeae (strain ATCC MYA-4620 / CBS 123657 / FGSC 9075 / NRRL 31084 / PH-1) (Wheat head blight fungus).